The sequence spans 323 residues: Beta-ketoacyl-[acyl-carrier-protein] synthase III (323 aa).

Residues Cys114 and His250 contribute to the active site. Positions 251-255 (QANIR) are ACP-binding. Residue Asn280 is part of the active site.

This sequence belongs to the thiolase-like superfamily. FabH family. Homodimer.

The protein resides in the cytoplasm. It carries out the reaction malonyl-[ACP] + acetyl-CoA + H(+) = 3-oxobutanoyl-[ACP] + CO2 + CoA. Its pathway is lipid metabolism; fatty acid biosynthesis. Functionally, catalyzes the condensation reaction of fatty acid synthesis by the addition to an acyl acceptor of two carbons from malonyl-ACP. Catalyzes the first condensation reaction which initiates fatty acid synthesis and may therefore play a role in governing the total rate of fatty acid production. Possesses both acetoacetyl-ACP synthase and acetyl transacylase activities. Its substrate specificity determines the biosynthesis of branched-chain and/or straight-chain of fatty acids. This is Beta-ketoacyl-[acyl-carrier-protein] synthase III from Ruegeria sp. (strain TM1040) (Silicibacter sp.).